Consider the following 276-residue polypeptide: Formamidopyrimidine-DNA glycosylase (276 aa).

Catalysis depends on proline 2, which acts as the Schiff-base intermediate with DNA. Glutamate 3 functions as the Proton donor in the catalytic mechanism. The Proton donor; for beta-elimination activity role is filled by lysine 58. The DNA site is built by histidine 92, arginine 111, and arginine 154. Residues 239-273 (HAYQRTGDPCERCGTPIQRIVVGQRGTHFCPKCQV) form an FPG-type zinc finger. Residue arginine 263 is the Proton donor; for delta-elimination activity of the active site.

The protein belongs to the FPG family. In terms of assembly, monomer. The cofactor is Zn(2+).

The enzyme catalyses Hydrolysis of DNA containing ring-opened 7-methylguanine residues, releasing 2,6-diamino-4-hydroxy-5-(N-methyl)formamidopyrimidine.. The catalysed reaction is 2'-deoxyribonucleotide-(2'-deoxyribose 5'-phosphate)-2'-deoxyribonucleotide-DNA = a 3'-end 2'-deoxyribonucleotide-(2,3-dehydro-2,3-deoxyribose 5'-phosphate)-DNA + a 5'-end 5'-phospho-2'-deoxyribonucleoside-DNA + H(+). Functionally, involved in base excision repair of DNA damaged by oxidation or by mutagenic agents. Acts as a DNA glycosylase that recognizes and removes damaged bases. Has a preference for oxidized purines, such as 7,8-dihydro-8-oxoguanine (8-oxoG). Has AP (apurinic/apyrimidinic) lyase activity and introduces nicks in the DNA strand. Cleaves the DNA backbone by beta-delta elimination to generate a single-strand break at the site of the removed base with both 3'- and 5'-phosphates. In Ligilactobacillus salivarius (strain UCC118) (Lactobacillus salivarius), this protein is Formamidopyrimidine-DNA glycosylase.